The sequence spans 39 residues: Photosystem II reaction center protein Y (39 aa).

A helical transmembrane segment spans residues 5 to 23 (VLVVVGPLLIAASWAVFNI).

This sequence belongs to the PsbY family. As to quaternary structure, PSII is composed of 1 copy each of membrane proteins PsbA, PsbB, PsbC, PsbD, PsbE, PsbF, PsbH, PsbI, PsbJ, PsbK, PsbL, PsbM, PsbT, PsbX, PsbY, PsbZ, Psb30/Ycf12, peripheral proteins PsbO, CyanoQ (PsbQ), PsbU, PsbV and a large number of cofactors. It forms dimeric complexes.

The protein localises to the cellular thylakoid membrane. Functionally, loosely associated component of the core of photosystem II (PSII), it is not always seen in crystals. PSII is a light-driven water plastoquinone oxidoreductase, using light energy to abstract electrons from H(2)O, generating a proton gradient subsequently used for ATP formation. The sequence is that of Photosystem II reaction center protein Y from Rippkaea orientalis (strain PCC 8801 / RF-1) (Cyanothece sp. (strain PCC 8801)).